We begin with the raw amino-acid sequence, 272 residues long: 5'-nucleotidase SurE (272 aa).

The a divalent metal cation site is built by D8, D9, S39, and N96.

Belongs to the SurE nucleotidase family. A divalent metal cation serves as cofactor.

It localises to the cytoplasm. It carries out the reaction a ribonucleoside 5'-phosphate + H2O = a ribonucleoside + phosphate. In terms of biological role, nucleotidase that shows phosphatase activity on nucleoside 5'-monophosphates. This Heliobacterium modesticaldum (strain ATCC 51547 / Ice1) protein is 5'-nucleotidase SurE.